Reading from the N-terminus, the 274-residue chain is Large ribosomal subunit protein uL2 (274 aa).

2 disordered regions span residues 28–53 and 223–274; these read APYAPLLEKNSKSGGRNNNGRITVRH and VAMN…RRNK. The span at 39-48 shows a compositional bias: low complexity; sequence KSGGRNNNGR.

This sequence belongs to the universal ribosomal protein uL2 family. Part of the 50S ribosomal subunit. Forms a bridge to the 30S subunit in the 70S ribosome.

In terms of biological role, one of the primary rRNA binding proteins. Required for association of the 30S and 50S subunits to form the 70S ribosome, for tRNA binding and peptide bond formation. It has been suggested to have peptidyltransferase activity; this is somewhat controversial. Makes several contacts with the 16S rRNA in the 70S ribosome. This chain is Large ribosomal subunit protein uL2, found in Pseudoalteromonas atlantica (strain T6c / ATCC BAA-1087).